We begin with the raw amino-acid sequence, 136 residues long: Small ribosomal subunit protein uS8c (136 aa).

It belongs to the universal ribosomal protein uS8 family. As to quaternary structure, part of the 30S ribosomal subunit.

Its subcellular location is the plastid. One of the primary rRNA binding proteins, it binds directly to 16S rRNA central domain where it helps coordinate assembly of the platform of the 30S subunit. This chain is Small ribosomal subunit protein uS8c (rps8), found in Helicosporidium sp. subsp. Simulium jonesii (Green alga).